The following is a 103-amino-acid chain: UPF0145 protein BCE33L0904 (103 aa).

This sequence belongs to the UPF0145 family.

In Bacillus cereus (strain ZK / E33L), this protein is UPF0145 protein BCE33L0904.